The chain runs to 110 residues: uncharacterized protein (110 aa).

A helical transmembrane segment spans residues 88–108; it reads LTRICLLIFGIGLVVLIFLKL.

The protein localises to the membrane. This is an uncharacterized protein from Rickettsia prowazekii (strain Madrid E).